The sequence spans 734 residues: Photosystem I P700 chlorophyll a apoprotein A2 (734 aa).

Transmembrane regions (helical) follow at residues 46 to 69 (IFASHFGQLAIIFLWTSGNLFHVA), 135 to 158 (LYTGALFLLFLSAISLIAGWLHLQ), 175 to 199 (LNHHLSGLFGVSSLAWTGHLVHVAI), 273 to 291 (MAHHHLAIAFIFLVAGHMY), 330 to 353 (IHFQLGLALASLGVITSLVAQHMY), 369 to 395 (AALYTHHQYIAGFIMTGAFAHGAIFFI), 417 to 439 (AIKSHLSWASLFLGFHTLGLYVH), and 517 to 535 (FLVHHAIALGLHTTTLILV). Residues Cys559 and Cys568 each contribute to the [4Fe-4S] cluster site. A run of 2 helical transmembrane segments spans residues 575-596 (AFYLAVFWMLNTIGWVTFYWHW) and 643-665 (LSVWAWMFLFGHLVWATGFMFLI). Chlorophyll a contacts are provided by His654, Met662, and Tyr670. Trp671 lines the phylloquinone pocket. A helical membrane pass occupies residues 707-727 (LVGLAHFSVGYIFTYAAFLIA).

Belongs to the PsaA/PsaB family. The PsaA/B heterodimer binds the P700 chlorophyll special pair and subsequent electron acceptors. PSI consists of a core antenna complex that captures photons, and an electron transfer chain that converts photonic excitation into a charge separation. The eukaryotic PSI reaction center is composed of at least 11 subunits. P700 is a chlorophyll a/chlorophyll a' dimer, A0 is one or more chlorophyll a, A1 is one or both phylloquinones and FX is a shared 4Fe-4S iron-sulfur center. serves as cofactor.

It localises to the plastid. The protein localises to the chloroplast thylakoid membrane. It carries out the reaction reduced [plastocyanin] + hnu + oxidized [2Fe-2S]-[ferredoxin] = oxidized [plastocyanin] + reduced [2Fe-2S]-[ferredoxin]. Functionally, psaA and PsaB bind P700, the primary electron donor of photosystem I (PSI), as well as the electron acceptors A0, A1 and FX. PSI is a plastocyanin-ferredoxin oxidoreductase, converting photonic excitation into a charge separation, which transfers an electron from the donor P700 chlorophyll pair to the spectroscopically characterized acceptors A0, A1, FX, FA and FB in turn. Oxidized P700 is reduced on the lumenal side of the thylakoid membrane by plastocyanin. The polypeptide is Photosystem I P700 chlorophyll a apoprotein A2 (Chloranthus spicatus (Chulantree)).